The chain runs to 380 residues: MAKRDYYEVLGVAKNASDDEIKKAYRKLAMKHHPDRNPGNKDAEGHFKEVKEAYEMLSDSQKRAAYDQYGHAGVDPNMGGAGAQGFGGFADAFGDIFGDIFGQAAGGAARGGGGRAGPQVYRGADLRYSMEITLEQAAHGYDTQIRVPSWVSCEVCHGSGAKPGTKPETCPTCSGSGSVRMSQGFFSIQQTCPKCHGTGTYIPDPCGHCHGAGKVKETKTLEVKIPAGIDDGMRIRSAGNGEPGINGGPSGDLYVEIHIKQHSVFERDGDDLHCQMPIPFTTAALGGEIEVPTLAGRASFTVPEGTQSGKTFRLRGKGIKGLRSSIAGDLYVHVQVETPVKLTEPQRDLLKQFEKALVEGGSRHSPQSKSWFDRVKSFFD.

The J domain occupies 5–70 (DYYEVLGVAK…QKRAAYDQYG (66 aa)). A CR-type zinc finger spans residues 140–218 (GYDTQIRVPS…CHGAGKVKET (79 aa)). Zn(2+) is bound by residues C153, C156, C170, C173, C192, C195, C206, and C209. CXXCXGXG motif repeat units follow at residues 153–160 (CEVCHGSG), 170–177 (CPTCSGSG), 192–199 (CPKCHGTG), and 206–213 (CGHCHGAG).

Belongs to the DnaJ family. In terms of assembly, homodimer. Zn(2+) serves as cofactor.

Its subcellular location is the cytoplasm. Functionally, participates actively in the response to hyperosmotic and heat shock by preventing the aggregation of stress-denatured proteins and by disaggregating proteins, also in an autonomous, DnaK-independent fashion. Unfolded proteins bind initially to DnaJ; upon interaction with the DnaJ-bound protein, DnaK hydrolyzes its bound ATP, resulting in the formation of a stable complex. GrpE releases ADP from DnaK; ATP binding to DnaK triggers the release of the substrate protein, thus completing the reaction cycle. Several rounds of ATP-dependent interactions between DnaJ, DnaK and GrpE are required for fully efficient folding. Also involved, together with DnaK and GrpE, in the DNA replication of plasmids through activation of initiation proteins. The polypeptide is Chaperone protein DnaJ (Paraburkholderia xenovorans (strain LB400)).